The following is a 361-amino-acid chain: Large ribosomal subunit protein uL3 (361 aa).

The span at 1 to 14 (MGRGGRRNPGRPRR) shows a compositional bias: basic residues. Disordered regions lie at residues 1 to 33 (MGRG…PRIR) and 337 to 361 (TSQQ…PASA).

This sequence belongs to the universal ribosomal protein uL3 family. Part of the 50S ribosomal subunit. Forms a cluster with proteins L14 and L24e.

One of the primary rRNA binding proteins, it binds directly near the 3'-end of the 23S rRNA, where it nucleates assembly of the 50S subunit. In Methanopyrus kandleri (strain AV19 / DSM 6324 / JCM 9639 / NBRC 100938), this protein is Large ribosomal subunit protein uL3.